Reading from the N-terminus, the 1654-residue chain is Outer membrane protein B (1654 aa).

Positions Gly-1334–Ala-1361 are excised as a propeptide. The Autotransporter domain maps to Ile-1366–Phe-1654.

This sequence belongs to the rickettsiae OmpA/OmpB family. The N-terminus is blocked.

The protein resides in the periplasm. It is found in the secreted. It localises to the cell surface. The protein localises to the cell outer membrane. Functionally, the 120 kDa surface-exposed protein is a major structural protein which may play a role as a rickettsial virulence factor and/or immunogen during infection. Its function is as follows. The 32 kDa beta peptide may serve as a membrane anchor. The chain is Outer membrane protein B (ompB) from Rickettsia rickettsii.